The following is a 429-amino-acid chain: UPF0597 protein AHA_1619 (429 aa).

The protein belongs to the UPF0597 family.

This Aeromonas hydrophila subsp. hydrophila (strain ATCC 7966 / DSM 30187 / BCRC 13018 / CCUG 14551 / JCM 1027 / KCTC 2358 / NCIMB 9240 / NCTC 8049) protein is UPF0597 protein AHA_1619.